The chain runs to 104 residues: Co-chaperonin GroES 3 (104 aa).

This sequence belongs to the GroES chaperonin family. As to quaternary structure, heptamer of 7 subunits arranged in a ring. Interacts with the chaperonin GroEL.

The protein resides in the cytoplasm. Its function is as follows. Together with the chaperonin GroEL, plays an essential role in assisting protein folding. The GroEL-GroES system forms a nano-cage that allows encapsulation of the non-native substrate proteins and provides a physical environment optimized to promote and accelerate protein folding. GroES binds to the apical surface of the GroEL ring, thereby capping the opening of the GroEL channel. The polypeptide is Co-chaperonin GroES 3 (Bradyrhizobium diazoefficiens (strain JCM 10833 / BCRC 13528 / IAM 13628 / NBRC 14792 / USDA 110)).